We begin with the raw amino-acid sequence, 143 residues long: uncharacterized protein (143 aa).

In terms of domain architecture, HTH cro/C1-type spans 24 to 78; the sequence is IRQRRRWQNMSQAALGEAIGVTFQQVQKYEKGSNRVGAGRLQQISDALEVHPSYF. Positions 35–54 form a DNA-binding region, H-T-H motif; the sequence is QAALGEAIGVTFQQVQKYEK.

This is an uncharacterized protein from Sinorhizobium fredii (strain NBRC 101917 / NGR234).